Consider the following 91-residue polypeptide: Acylphosphatase (91 aa).

Residues 6-91 (CMRCYISGRV…WEDYISFDVL (86 aa)) form the Acylphosphatase-like domain. Residues Arg-21 and Asn-39 contribute to the active site.

It belongs to the acylphosphatase family.

The catalysed reaction is an acyl phosphate + H2O = a carboxylate + phosphate + H(+). The sequence is that of Acylphosphatase (acyP) from Legionella pneumophila (strain Corby).